The following is a 293-amino-acid chain: Protease HtpX (293 aa).

The next 2 membrane-spanning stretches (helical) occupy residues 4–24 and 34–54; these read IALF…VLSL and GLMI…LLMS. Position 139 (His-139) interacts with Zn(2+). The active site involves Glu-140. Zn(2+) is bound at residue His-143. Transmembrane regions (helical) follow at residues 158–178 and 193–213; these read VVNT…AGFM and LIYF…ASII. Glu-222 is a binding site for Zn(2+).

The protein belongs to the peptidase M48B family. Zn(2+) is required as a cofactor.

Its subcellular location is the cell inner membrane. This Escherichia coli O127:H6 (strain E2348/69 / EPEC) protein is Protease HtpX.